The sequence spans 176 residues: MRKVKPARKLGRTAAHRKATLSSLSTQLILHKRIETTEAKAKETRKVVEKIITKARKGTVHAQREIFKDIRDKEAIKTLFEEIVGKVGTRNGGYTRVIKLCPRFGDAAKMAVIELVDFAEAPAAAPKAARQDRSKRVKGSRKTEASAAKAAPAAQAAPELPAESDAPAAEAAPTEE.

A disordered region spans residues 124 to 176 (AAPKAARQDRSKRVKGSRKTEASAAKAAPAAQAAPELPAESDAPAAEAAPTEE). Over residues 145 to 176 (ASAAKAAPAAQAAPELPAESDAPAAEAAPTEE) the composition is skewed to low complexity.

Belongs to the bacterial ribosomal protein bL17 family. Part of the 50S ribosomal subunit. Contacts protein L32.

This Chlorobium phaeovibrioides (strain DSM 265 / 1930) (Prosthecochloris vibrioformis (strain DSM 265)) protein is Large ribosomal subunit protein bL17.